A 353-amino-acid chain; its full sequence is Alanine racemase (353 aa).

The Proton acceptor; specific for D-alanine role is filled by Lys34. Lys34 bears the N6-(pyridoxal phosphate)lysine mark. A substrate-binding site is contributed by Arg128. The active-site Proton acceptor; specific for L-alanine is Tyr251. Met299 lines the substrate pocket.

It belongs to the alanine racemase family. The cofactor is pyridoxal 5'-phosphate.

It catalyses the reaction L-alanine = D-alanine. It functions in the pathway amino-acid biosynthesis; D-alanine biosynthesis; D-alanine from L-alanine: step 1/1. Catalyzes the interconversion of L-alanine and D-alanine. May also act on other amino acids. The polypeptide is Alanine racemase (alr) (Alcanivorax borkumensis (strain ATCC 700651 / DSM 11573 / NCIMB 13689 / SK2)).